Reading from the N-terminus, the 149-residue chain is Transcription antitermination protein NusB (149 aa).

It belongs to the NusB family.

In terms of biological role, involved in transcription antitermination. Required for transcription of ribosomal RNA (rRNA) genes. Binds specifically to the boxA antiterminator sequence of the ribosomal RNA (rrn) operons. The protein is Transcription antitermination protein NusB of Sphingopyxis alaskensis (strain DSM 13593 / LMG 18877 / RB2256) (Sphingomonas alaskensis).